Here is a 232-residue protein sequence, read N- to C-terminus: Aliphatic sulfonates import ATP-binding protein SsuB 2 (232 aa).

Residues 1–216 (MDIRVDRKAF…PRDRRDPLLA (216 aa)) form the ABC transporter domain. 33-40 (GPSGCGKS) provides a ligand contact to ATP.

This sequence belongs to the ABC transporter superfamily. Aliphatic sulfonates importer (TC 3.A.1.17.2) family. The complex is composed of two ATP-binding proteins (SsuB), two transmembrane proteins (SsuC) and a solute-binding protein (SsuA).

Its subcellular location is the cell inner membrane. The enzyme catalyses ATP + H2O + aliphatic sulfonate-[sulfonate-binding protein]Side 1 = ADP + phosphate + aliphatic sulfonateSide 2 + [sulfonate-binding protein]Side 1.. In terms of biological role, part of the ABC transporter complex SsuABC involved in aliphatic sulfonates import. Responsible for energy coupling to the transport system. The protein is Aliphatic sulfonates import ATP-binding protein SsuB 2 of Pseudomonas syringae pv. tomato (strain ATCC BAA-871 / DC3000).